Here is a 671-residue protein sequence, read N- to C-terminus: Gametogenetin-binding protein 2-like (671 aa).

2 disordered regions span residues 372–489 and 532–562; these read REQK…ARVQ and VRDSGYGSDPPSHAGSRTSSAISSPEGSEVS. A compositionally biased stretch (basic residues) spans 373 to 384; sequence EQKKLKKKKKKD. Residues 385-395 are compositionally biased toward basic and acidic residues; sequence EKKNLLHRQCD. Over residues 396 to 420 the composition is skewed to acidic residues; the sequence is DTEANESDEEEEELRNEELDLEEES. The segment covering 455 to 472 has biased composition (basic residues); that stretch reads TKSKPKKQSKKKKQKKAA. Polar residues-rich tracts occupy residues 476–486 and 546–557; these read MGNQKQMQATA and GSRTSSAISSPE.

This is Gametogenetin-binding protein 2-like from Drosophila melanogaster (Fruit fly).